Consider the following 141-residue polypeptide: Hemoglobin subunit beta (141 aa).

Residues 2–141 enclose the Globin domain; sequence HWSEVELHEI…VVDAISKEYH (140 aa). The heme b site is built by His58 and His87.

It belongs to the globin family. In terms of assembly, heterotetramer of two alpha chains and two beta chains. Red blood cells.

Its function is as follows. Involved in oxygen transport from the lung to the various peripheral tissues. This Heterodontus portusjacksoni (Port Jackson shark) protein is Hemoglobin subunit beta (HBB).